The primary structure comprises 402 residues: UDP-N-acetylmuramoylalanine--D-glutamate ligase (402 aa).

97–103 (GTNGKTT) lines the ATP pocket.

This sequence belongs to the MurCDEF family.

The protein resides in the cytoplasm. It catalyses the reaction UDP-N-acetyl-alpha-D-muramoyl-L-alanine + D-glutamate + ATP = UDP-N-acetyl-alpha-D-muramoyl-L-alanyl-D-glutamate + ADP + phosphate + H(+). The protein operates within cell wall biogenesis; peptidoglycan biosynthesis. Cell wall formation. Catalyzes the addition of glutamate to the nucleotide precursor UDP-N-acetylmuramoyl-L-alanine (UMA). The polypeptide is UDP-N-acetylmuramoylalanine--D-glutamate ligase (Campylobacter jejuni subsp. jejuni serotype O:6 (strain 81116 / NCTC 11828)).